A 500-amino-acid polypeptide reads, in one-letter code: MNYFPWLTIIVVFPISAGSLMLFLPYRGNKVHKWYTICICILELLLTTYTFCYNFKMNDPLIQLSEDYKWINFLDFYWRLGIDGLSIGTILLTGFITTLAILAAFPVTRDSRLFHFLMLAMYSGQIGSFSSQDLLLFFIMWELELIPVYLLLSMWGGKKRLYSATKFILYTAGSSIFLLIGVLGISLYGSNEPTLNLELLANQSYPVTLEIILYIGFLIAFAVKSPLIPLHTWLPDTHGEAHYSTCMLLAGILLKMGAYGLVRINMELLPHAHSMFSPWLMVVGTIQIIYAASTSPGQRNLKKRIAYSSVSHMGFIIIGIASITDPGLNGAILQIISHGFIGAALFFLAGTSYDRIRLVSLDEMGGMAISIPKIFTMFTILSMASLALPGMSGFVAEFIVFFGIITSQKYLLMAKILIIFVMAIGMILTPIYLLSMSRQMFYGYKLINVQNFSFFDSGPREFFLSISSLLPIIGMGIYPDFVLALASNKVESILSNYFYG.

14 helical membrane-spanning segments follow: residues 4 to 24 (FPWL…MLFL), 35 to 55 (YTIC…CYNF), 87 to 107 (IGTI…AFPV), 113 to 130 (LFHF…GSFS), 134 to 154 (LLLF…LLSM), 167 to 187 (FILY…GISL), 211 to 231 (IILY…IPLH), 242 to 262 (HYST…YGLV), 272 to 292 (AHSM…IYAA), 305 to 325 (IAYS…SITD), 330 to 350 (GAIL…FLAG), 386 to 406 (LALP…GIIT), 416 to 436 (ILII…LLSM), and 466 to 486 (ISSL…LALA).

It belongs to the complex I subunit 4 family.

It localises to the plastid. Its subcellular location is the chloroplast thylakoid membrane. It carries out the reaction a plastoquinone + NADH + (n+1) H(+)(in) = a plastoquinol + NAD(+) + n H(+)(out). The catalysed reaction is a plastoquinone + NADPH + (n+1) H(+)(in) = a plastoquinol + NADP(+) + n H(+)(out). This is NAD(P)H-quinone oxidoreductase chain 4, chloroplastic from Aethionema grandiflorum (Persian stone-cress).